Reading from the N-terminus, the 130-residue chain is 3-aminoacrylate deaminase RutC (130 aa).

It belongs to the RutC family.

The catalysed reaction is (Z)-3-aminoacrylate + H2O + H(+) = 3-oxopropanoate + NH4(+). Involved in pyrimidine catabolism. Catalyzes the deamination of 3-aminoacrylate to malonic semialdehyde, a reaction that can also occur spontaneously. RutC may facilitate the reaction and modulate the metabolic fitness, rather than catalyzing essential functions. The chain is 3-aminoacrylate deaminase RutC from Methylorubrum extorquens (strain CM4 / NCIMB 13688) (Methylobacterium extorquens).